A 1183-amino-acid polypeptide reads, in one-letter code: PAN2-PAN3 deadenylation complex catalytic subunit PAN2 (1183 aa).

2 WD repeats span residues 150–189 and 289–328; these read SIENSSPVVKLAPLHRTVLAAGLSGQVTVLDPRTGFKAAQ and DVSSYITSMALSSRGDYLAFGDGDGQLHVWTTNETGENAA. The interval 331–478 is linker; that stretch reads ENGSIVLPPF…EEIEEELNDG (148 aa). Residues 439–470 form a disordered region; that stretch reads AEGRARGKGRRDSGPRFRSEKDKKGTYKDKEE. The span at 448 to 469 shows a compositional bias: basic and acidic residues; the sequence is RRDSGPRFRSEKDKKGTYKDKE. One can recognise a USP domain in the interval 479 to 864; it reads EVPKYYRKVE…VPAVIILERE (386 aa). An Exonuclease domain is found at 916 to 1085; it reads VAIDAEFVAL…HDSIEDAHFA (170 aa). The a divalent metal cation site is built by Asp-919, Glu-921, Asp-1028, and Asp-1081. Positions 1155 to 1183 are disordered; it reads KSRMATPPPPTKLGLPQWASQNSPSPLRR. Residues 1172-1183 are compositionally biased toward polar residues; that stretch reads WASQNSPSPLRR.

The protein belongs to the peptidase C19 family. PAN2 subfamily. As to quaternary structure, forms a heterotrimer with an asymmetric homodimer of the regulatory subunit PAN3 to form the poly(A)-nuclease (PAN) deadenylation complex. The cofactor is a divalent metal cation.

It is found in the cytoplasm. It carries out the reaction Exonucleolytic cleavage of poly(A) to 5'-AMP.. With respect to regulation, positively regulated by the regulatory subunit PAN3. Catalytic subunit of the poly(A)-nuclease (PAN) deadenylation complex, one of two cytoplasmic mRNA deadenylases involved in mRNA turnover. PAN specifically shortens poly(A) tails of RNA and the activity is stimulated by poly(A)-binding protein PAB1. PAN deadenylation is followed by rapid degradation of the shortened mRNA tails by the CCR4-NOT complex. Deadenylated mRNAs are then degraded by two alternative mechanisms, namely exosome-mediated 3'-5' exonucleolytic degradation, or deadenylation-dependent mRNA decaping and subsequent 5'-3' exonucleolytic degradation by XRN1. May also be involved in post-transcriptional maturation of mRNA poly(A) tails. This Cryptococcus neoformans var. neoformans serotype D (strain B-3501A) (Filobasidiella neoformans) protein is PAN2-PAN3 deadenylation complex catalytic subunit PAN2.